The sequence spans 301 residues: GTPase Era (301 aa).

Residues 8-174 enclose the Era-type G domain; it reads KSGFVALVGR…LKTLKDYLPE (167 aa). The tract at residues 16 to 23 is G1; that stretch reads GRPNVGKS. 16–23 contacts GTP; sequence GRPNVGKS. The interval 42 to 46 is G2; it reads QTTRN. Residues 63–66 form a G3 region; sequence DTPG. GTP-binding positions include 63–67 and 124–127; these read DTPGI and NKID. The interval 124–127 is G4; sequence NKID. The tract at residues 153–155 is G5; it reads ISA. Positions 197 to 282 constitute a KH type-2 domain; the sequence is IREQILRLTD…NLKLWVKVRR (86 aa).

The protein belongs to the TRAFAC class TrmE-Era-EngA-EngB-Septin-like GTPase superfamily. Era GTPase family. In terms of assembly, monomer.

It is found in the cytoplasm. The protein resides in the cell membrane. Its function is as follows. An essential GTPase that binds both GDP and GTP, with rapid nucleotide exchange. Plays a role in 16S rRNA processing and 30S ribosomal subunit biogenesis and possibly also in cell cycle regulation and energy metabolism. The chain is GTPase Era from Lactobacillus delbrueckii subsp. bulgaricus (strain ATCC 11842 / DSM 20081 / BCRC 10696 / JCM 1002 / NBRC 13953 / NCIMB 11778 / NCTC 12712 / WDCM 00102 / Lb 14).